A 110-amino-acid polypeptide reads, in one-letter code: Snake venom vascular endothelial growth factor toxin ICPP (110 aa).

A Pyrrolidone carboxylic acid modification is found at Gln-1. 3 disulfide bridges follow: Cys-14–Cys-56, Cys-45–Cys-91, and Cys-49–Cys-93.

As to quaternary structure, homodimer; disulfide-linked. Interacts with high affinity with KDR/VEGFR-2, and with a lower affinity with neuropilin-1 (NRP1) and neuropilin-2 (NRP2). In terms of tissue distribution, expressed by the venom gland.

The protein resides in the secreted. Its function is as follows. Snake venom VEGFs may contribute to venom dispersion and prey subjugation by inducing vascular permeability and hypotension. This protein increases vascular permeability and angiogenesis probably through VEGF receptor (KDR/VEGFR-2) signaling. Induces DNA synthesis in human umbilical vein endothelial cells, and promotes mouse embryonic stem cell proliferation and differentiation. It may also induce a drastic hypotensive effect after intravenous injection. The hypotension is mediated by nitric oxide (NO), which is produced by VEGF-activated endothelium NO synthase. In Macrovipera lebetinus (Levantine viper), this protein is Snake venom vascular endothelial growth factor toxin ICPP.